We begin with the raw amino-acid sequence, 311 residues long: Peptide methionine sulfoxide reductase MsrA/MsrB (311 aa).

The interval 1–155 (MAEIYLAGGC…PGGYCHINVN (155 aa)) is peptide methionine sulfoxide reductase A. Residue cysteine 10 is part of the active site. In terms of domain architecture, MsrB spans 172 to 295 (DAELKEQLTQ…NSAALRFIPK (124 aa)). The active-site Nucleophile is cysteine 284.

The protein in the N-terminal section; belongs to the MsrA Met sulfoxide reductase family. It in the C-terminal section; belongs to the MsrB Met sulfoxide reductase family.

The enzyme catalyses L-methionyl-[protein] + [thioredoxin]-disulfide + H2O = L-methionyl-(S)-S-oxide-[protein] + [thioredoxin]-dithiol. It carries out the reaction [thioredoxin]-disulfide + L-methionine + H2O = L-methionine (S)-S-oxide + [thioredoxin]-dithiol. It catalyses the reaction L-methionyl-[protein] + [thioredoxin]-disulfide + H2O = L-methionyl-(R)-S-oxide-[protein] + [thioredoxin]-dithiol. Functionally, has an important function as a repair enzyme for proteins that have been inactivated by oxidation. Catalyzes the reversible oxidation-reduction of methionine sulfoxide in proteins to methionine. Involved in protection against oxidative stress when the bacterium enters the host bloodstream and required for maximal growth under aerobic and anaerobic conditions. The polypeptide is Peptide methionine sulfoxide reductase MsrA/MsrB (msrAB) (Streptococcus gordonii (strain Challis / ATCC 35105 / BCRC 15272 / CH1 / DL1 / V288)).